The following is a 162-amino-acid chain: Phosphopantetheine adenylyltransferase (162 aa).

Serine 9 is a substrate binding site. Residues 9 to 10 (SF) and histidine 17 each bind ATP. Positions 41, 77, and 91 each coordinate substrate. Residues 92–94 (GLR), glutamate 102, and 126–132 (YAFLSSS) contribute to the ATP site.

This sequence belongs to the bacterial CoaD family. In terms of assembly, homohexamer. It depends on Mg(2+) as a cofactor.

The protein localises to the cytoplasm. It carries out the reaction (R)-4'-phosphopantetheine + ATP + H(+) = 3'-dephospho-CoA + diphosphate. It functions in the pathway cofactor biosynthesis; coenzyme A biosynthesis; CoA from (R)-pantothenate: step 4/5. In terms of biological role, reversibly transfers an adenylyl group from ATP to 4'-phosphopantetheine, yielding dephospho-CoA (dPCoA) and pyrophosphate. The protein is Phosphopantetheine adenylyltransferase of Frankia casuarinae (strain DSM 45818 / CECT 9043 / HFP020203 / CcI3).